Consider the following 309-residue polypeptide: Gamma-hemolysin component A (309 aa).

The N-terminal stretch at 1-29 (MIKNKILTATLAVGLIAPLANPFIEISKA) is a signal peptide.

This sequence belongs to the aerolysin family. As to quaternary structure, toxicity requires sequential binding and synergistic association of a class S and a class F component which form heterooligomeric complexes. HlgA (class S) associates with HlgB (class F) thus forming an AB toxin in strains producing both gamma-hemolysins and leukocidins. HlgA and LukF-PV can also form a complex.

The protein resides in the secreted. Its function is as follows. Toxin that seems to act by forming pores in the membrane of the cell. Has a hemolytic and a leucotoxic activity. This is Gamma-hemolysin component A (hlgA) from Staphylococcus aureus (strain COL).